We begin with the raw amino-acid sequence, 104 residues long: Inclusion membrane protein F (104 aa).

2 helical membrane passes run 39-59 (LVVALAALVLNGALCVLSLVA) and 70-90 (LAVLVATTLASFLCVAYVLFI).

The protein localises to the secreted. It localises to the host vacuole. It is found in the host pathogen-containing vacuole. The protein resides in the host pathogen-containing vacuole membrane. In terms of biological role, inclusion membrane protein probably involved in early modification events of the chlamydial inclusion. The protein is Inclusion membrane protein F of Chlamydia trachomatis serovar L2 (strain ATCC VR-902B / DSM 19102 / 434/Bu).